The primary structure comprises 156 residues: Transcription inhibitor protein Gfh1 (156 aa).

Residues 1 to 74 (MAREVKLTKA…LEDILSRAVI (74 aa)) adopt a coiled-coil conformation.

This sequence belongs to the GreA/GreB family. Interacts with RNAP.

Inhibits all catalytic activities of RNA polymerase (RNAP) by partially occluding its substrate-binding site and preventing NTP binding. This Thermus thermophilus (strain ATCC BAA-163 / DSM 7039 / HB27) protein is Transcription inhibitor protein Gfh1 (gfh1).